The sequence spans 248 residues: tRNA (guanine-N(1)-)-methyltransferase (248 aa).

Residues glycine 113 and 133–138 each bind S-adenosyl-L-methionine; that span reads IGDYVL.

This sequence belongs to the RNA methyltransferase TrmD family. In terms of assembly, homodimer.

It is found in the cytoplasm. It catalyses the reaction guanosine(37) in tRNA + S-adenosyl-L-methionine = N(1)-methylguanosine(37) in tRNA + S-adenosyl-L-homocysteine + H(+). Specifically methylates guanosine-37 in various tRNAs. This Shewanella denitrificans (strain OS217 / ATCC BAA-1090 / DSM 15013) protein is tRNA (guanine-N(1)-)-methyltransferase.